A 419-amino-acid chain; its full sequence is Serine hydroxymethyltransferase (419 aa).

Residues Leu-121 and Gly-125 to Leu-127 contribute to the (6S)-5,6,7,8-tetrahydrofolate site. An N6-(pyridoxal phosphate)lysine modification is found at Lys-230. Ser-355–Phe-357 lines the (6S)-5,6,7,8-tetrahydrofolate pocket.

This sequence belongs to the SHMT family. In terms of assembly, homodimer. Pyridoxal 5'-phosphate is required as a cofactor.

The protein localises to the cytoplasm. It carries out the reaction (6R)-5,10-methylene-5,6,7,8-tetrahydrofolate + glycine + H2O = (6S)-5,6,7,8-tetrahydrofolate + L-serine. The protein operates within one-carbon metabolism; tetrahydrofolate interconversion. Its pathway is amino-acid biosynthesis; glycine biosynthesis; glycine from L-serine: step 1/1. Its function is as follows. Catalyzes the reversible interconversion of serine and glycine with tetrahydrofolate (THF) serving as the one-carbon carrier. This reaction serves as the major source of one-carbon groups required for the biosynthesis of purines, thymidylate, methionine, and other important biomolecules. Also exhibits THF-independent aldolase activity toward beta-hydroxyamino acids, producing glycine and aldehydes, via a retro-aldol mechanism. The sequence is that of Serine hydroxymethyltransferase from Streptococcus equi subsp. zooepidemicus (strain H70).